The chain runs to 47 residues: High light-inducible protein HliC (47 aa).

At 1–14 (MNNENSKFGFTAFA) the chain is on the cytoplasmic side. The short motif at 15–20 (ENWNGR) is the Chlorophyll-binding motif element. The chain crosses the lipid bilayer at residues 15–36 (ENWNGRLAMIGFSSALILELVS). Over 37 to 47 (GQGVLHFFGIL) the chain is Lumenal, thylakoid.

Belongs to the Hlip family. Forms heterodimers with both HliA and HliB; these are associated with photosystem II (PSII) assembly intermediates containing CP47 (psbB). In the absence of CP47 (psbB) and HliD, forms a homooligomer in vivo that binds 2 chlorophyll a and 1 beta-carotenoid per monomer. Cofractionates in an approximately 50 kDa fraction the thylakoid membrane with HliD. Associated in vivo with monomeric PSII. Purified in several chlorophyll- and carotenoid-containing complexes, including photosystem II (PSII) assembly intermediate complex RCII* (iD1, D1, D2, PsbE, PsbF, PsbI, Ycf39, Ycf48, HliC and HliD) and the Ycf39-Hlip complex (Ycf39, HliC, HliD and pigments).

The protein resides in the cellular thylakoid membrane. In terms of biological role, forms a number of heteromers involved in photosystem II (PSII) assembly and/or repair under high light stress. Required for binding of chlorophyll and carotenoids by the Ycf39-Hlip complex. The Ycf39-Hlip complex binds D1 at an early stage of PSII assembly along with Ycf48, ribosomes and ChlG, the last enzyme in chlorophyll biosynthesis; it may be involved in chlorophyll reuse and delivery to D1 in the initial stages of PSII assembly. HliA-HliC and HliB-HliC heterodimers bind chlorophyll and carotenoids in a 1:0.6 ratio. Complexes bind mostly beta-carotenoid, but minor amounts of echinenone and beta-crytoxanthin are also detected. The complexes efficiently quench chlorophyll fluorescence, contributing to photoprotection. Deletion of 4 to 5 members of the Hlip family suggests the proteins are involved in regulation of chlorophyll biosynthesis, in stabilization of chlorophyll-binding proteins and/or in reuse of chlorophylls, and may regulate tetrapyrrole biosynthesis. Might bind chlorophyll and/or carotenoids in association with HliD (called the ScpBE pair). Functionally, the Hlips might regulate tetrapyrrole biosynthesis, maybe at the level of aminolevulinic acid synthesis and probably stabilize PSII assembly intermediates. This Synechocystis sp. (strain ATCC 27184 / PCC 6803 / Kazusa) protein is High light-inducible protein HliC (hliC).